A 175-amino-acid polypeptide reads, in one-letter code: Large ribosomal subunit protein uL10 (175 aa).

The protein belongs to the universal ribosomal protein uL10 family. Part of the ribosomal stalk of the 50S ribosomal subunit. The N-terminus interacts with L11 and the large rRNA to form the base of the stalk. The C-terminus forms an elongated spine to which L12 dimers bind in a sequential fashion forming a multimeric L10(L12)X complex.

Functionally, forms part of the ribosomal stalk, playing a central role in the interaction of the ribosome with GTP-bound translation factors. This chain is Large ribosomal subunit protein uL10, found in Psychrobacter arcticus (strain DSM 17307 / VKM B-2377 / 273-4).